The chain runs to 433 residues: Glutamate-1-semialdehyde 2,1-aminomutase (433 aa).

K266 is subject to N6-(pyridoxal phosphate)lysine.

Belongs to the class-III pyridoxal-phosphate-dependent aminotransferase family. HemL subfamily. In terms of assembly, homodimer. Pyridoxal 5'-phosphate serves as cofactor.

It is found in the cytoplasm. It catalyses the reaction (S)-4-amino-5-oxopentanoate = 5-aminolevulinate. Its pathway is porphyrin-containing compound metabolism; protoporphyrin-IX biosynthesis; 5-aminolevulinate from L-glutamyl-tRNA(Glu): step 2/2. The sequence is that of Glutamate-1-semialdehyde 2,1-aminomutase from Psychrobacter arcticus (strain DSM 17307 / VKM B-2377 / 273-4).